We begin with the raw amino-acid sequence, 163 residues long: Phosphopantetheine adenylyltransferase (163 aa).

Residue T10 participates in substrate binding. Residues 10-11 (TF) and H18 each bind ATP. Positions 42, 74, and 88 each coordinate substrate. ATP-binding positions include 89–91 (GLR), E99, and 124–130 (NSFISST).

Belongs to the bacterial CoaD family. As to quaternary structure, homohexamer. Requires Mg(2+) as cofactor.

The protein resides in the cytoplasm. It catalyses the reaction (R)-4'-phosphopantetheine + ATP + H(+) = 3'-dephospho-CoA + diphosphate. It functions in the pathway cofactor biosynthesis; coenzyme A biosynthesis; CoA from (R)-pantothenate: step 4/5. Reversibly transfers an adenylyl group from ATP to 4'-phosphopantetheine, yielding dephospho-CoA (dPCoA) and pyrophosphate. This is Phosphopantetheine adenylyltransferase from Shewanella baltica (strain OS195).